Consider the following 1710-residue polypeptide: Protein NETWORKED 1B (1710 aa).

In terms of domain architecture, NAB spans 13–92; the sequence is YSWWWDSHIP…ERYDHTTVEL (80 aa). The interval 113-159 is disordered; it reads EDSASSSSEPRTEADTEALQKDGTKSKRSFSQMNKLDGTSDSHEADS. 2 stretches are compositionally biased toward basic and acidic residues: residues 122-137 and 150-159; these read PRTE…DGTK and GTSDSHEADS. 6 coiled-coil regions span residues 152–446, 474–546, 579–883, 974–1021, 1095–1259, and 1285–1336; these read SDSH…ELGA, QMLR…EIHC, VKKL…IDSL, HQCG…FESL, VSSL…LQEK, and LILE…LSAY. Residues 1409–1448 form a disordered region; it reads RLSRQITRSTSQKRRDRRKIENIQPDDQVTGESRQPRLRP. Residues 1559 to 1665 adopt a coiled-coil conformation; that stretch reads RRLSSLRISL…VLKLEDGTKS (107 aa).

The protein belongs to the NET family. As to expression, expressed in root meristems and at very low levels throughout mature vasculature.

Its function is as follows. Plant-specific actin binding protein. May be part of a membrane-cytoskeletal adapter complex. This chain is Protein NETWORKED 1B, found in Arabidopsis thaliana (Mouse-ear cress).